Here is a 71-residue protein sequence, read N- to C-terminus: DNA-directed RNA polymerase subunit epsilon (71 aa).

Belongs to the RNA polymerase subunit epsilon family. As to quaternary structure, RNAP is composed of a core of 2 alpha, a beta and a beta' subunit. The core is associated with a delta subunit, and at least one of epsilon or omega. When a sigma factor is associated with the core the holoenzyme is formed, which can initiate transcription.

It catalyses the reaction RNA(n) + a ribonucleoside 5'-triphosphate = RNA(n+1) + diphosphate. Functionally, a non-essential component of RNA polymerase (RNAP). The chain is DNA-directed RNA polymerase subunit epsilon from Staphylococcus carnosus (strain TM300).